A 443-amino-acid polypeptide reads, in one-letter code: Ribosomal protein uS12 methylthiotransferase RimO (443 aa).

The 116-residue stretch at 1–116 folds into the MTTase N-terminal domain; that stretch reads MKFHLISLGC…IAEYVGKLIA (116 aa). [4Fe-4S] cluster-binding residues include Cys10, Cys45, Cys79, Cys154, Cys158, and Cys161. Positions 140-370 constitute a Radical SAM core domain; the sequence is STPFFRAWVK…LELQQELSTE (231 aa). One can recognise a TRAM domain in the interval 373 to 441; the sequence is KKYVGTVQKV…QYDLVGGVVS (69 aa).

The protein belongs to the methylthiotransferase family. RimO subfamily. It depends on [4Fe-4S] cluster as a cofactor.

It is found in the cytoplasm. The catalysed reaction is L-aspartate(89)-[ribosomal protein uS12]-hydrogen + (sulfur carrier)-SH + AH2 + 2 S-adenosyl-L-methionine = 3-methylsulfanyl-L-aspartate(89)-[ribosomal protein uS12]-hydrogen + (sulfur carrier)-H + 5'-deoxyadenosine + L-methionine + A + S-adenosyl-L-homocysteine + 2 H(+). Catalyzes the methylthiolation of an aspartic acid residue of ribosomal protein uS12. In Desulfotalea psychrophila (strain LSv54 / DSM 12343), this protein is Ribosomal protein uS12 methylthiotransferase RimO.